The chain runs to 232 residues: 2,3,4,5-tetrahydropyridine-2,6-dicarboxylate N-acetyltransferase (232 aa).

This sequence belongs to the transferase hexapeptide repeat family. DapH subfamily.

The catalysed reaction is (S)-2,3,4,5-tetrahydrodipicolinate + acetyl-CoA + H2O = L-2-acetamido-6-oxoheptanedioate + CoA. Its pathway is amino-acid biosynthesis; L-lysine biosynthesis via DAP pathway; LL-2,6-diaminopimelate from (S)-tetrahydrodipicolinate (acetylase route): step 1/3. Functionally, catalyzes the transfer of an acetyl group from acetyl-CoA to tetrahydrodipicolinate. This Streptococcus suis (strain 98HAH33) protein is 2,3,4,5-tetrahydropyridine-2,6-dicarboxylate N-acetyltransferase.